The sequence spans 76 residues: Conotoxin Cal5a L1 (76 aa).

The signal sequence occupies residues 1-22 (MRFYIGLMAALMLTSILRTDSA). Positions 23 to 42 (SVDQTGAEGGLALIERVIRQ) are excised as a propeptide. At proline 50 the chain carries 4-hydroxyproline. The residue at position 58 (proline 58) is a 4-hydroxyproline; in form cal5a, and form cal5b. The residue at position 62 (proline 62) is a 4-hydroxyproline; in form cal5a, form cal5b, and form cal5c. 4-hydroxyproline; in form cal5a, form cal5b, form cal5c, and form cal5d is present on proline 64.

Contains 2 disulfide bonds that can be either 'C1-C3, C2-C4' or 'C1-C4, C2-C3', since these disulfide connectivities have been observed for conotoxins with cysteine framework V (for examples, see AC P0DQQ7 and AC P81755). In terms of processing, five different peptides have been described after total venom examination by HPLC-MS. Cal5a is the longest. Cal5b-Cal5e are identical in length but are differentially hydroxylated. It is possible that hydroxylation and proteolysis at position 53 are incomplete in some of these peptides. In terms of tissue distribution, expressed by the venom duct.

It localises to the secreted. Its function is as follows. Probable neurotoxin with unknown target. Possibly targets ion channels. In Californiconus californicus (California cone), this protein is Conotoxin Cal5a L1.